The sequence spans 419 residues: Effector protein BipC (419 aa).

Disordered regions lie at residues 62–91 and 338–402; these read VAGSGAQRVELARPKPDAQTRATDRRTVSG and LQSG…AKSQ. 2 stretches are compositionally biased toward basic and acidic residues: residues 71–91 and 380–392; these read ELARPKPDAQTRATDRRTVSG and TRDEAAHRSREAA.

It belongs to the SctB/SipC family.

It localises to the secreted. This Burkholderia mallei (strain NCTC 10247) protein is Effector protein BipC (bipC).